Consider the following 162-residue polypeptide: SsrA-binding protein (162 aa).

The protein belongs to the SmpB family.

The protein localises to the cytoplasm. Its function is as follows. Required for rescue of stalled ribosomes mediated by trans-translation. Binds to transfer-messenger RNA (tmRNA), required for stable association of tmRNA with ribosomes. tmRNA and SmpB together mimic tRNA shape, replacing the anticodon stem-loop with SmpB. tmRNA is encoded by the ssrA gene; the 2 termini fold to resemble tRNA(Ala) and it encodes a 'tag peptide', a short internal open reading frame. During trans-translation Ala-aminoacylated tmRNA acts like a tRNA, entering the A-site of stalled ribosomes, displacing the stalled mRNA. The ribosome then switches to translate the ORF on the tmRNA; the nascent peptide is terminated with the 'tag peptide' encoded by the tmRNA and targeted for degradation. The ribosome is freed to recommence translation, which seems to be the essential function of trans-translation. This chain is SsrA-binding protein, found in Buchnera aphidicola subsp. Acyrthosiphon pisum (strain 5A).